The following is a 393-amino-acid chain: NAD(P)H-quinone oxidoreductase subunit H, chloroplastic (393 aa).

It belongs to the complex I 49 kDa subunit family. NDH is composed of at least 16 different subunits, 5 of which are encoded in the nucleus.

It localises to the plastid. The protein resides in the chloroplast thylakoid membrane. The catalysed reaction is a plastoquinone + NADH + (n+1) H(+)(in) = a plastoquinol + NAD(+) + n H(+)(out). It catalyses the reaction a plastoquinone + NADPH + (n+1) H(+)(in) = a plastoquinol + NADP(+) + n H(+)(out). Its function is as follows. NDH shuttles electrons from NAD(P)H:plastoquinone, via FMN and iron-sulfur (Fe-S) centers, to quinones in the photosynthetic chain and possibly in a chloroplast respiratory chain. The immediate electron acceptor for the enzyme in this species is believed to be plastoquinone. Couples the redox reaction to proton translocation, and thus conserves the redox energy in a proton gradient. The chain is NAD(P)H-quinone oxidoreductase subunit H, chloroplastic from Pelargonium hortorum (Common geranium).